A 229-amino-acid chain; its full sequence is 2,3-bisphosphoglycerate-dependent phosphoglycerate mutase (229 aa).

Substrate is bound by residues 8 to 15, 21 to 22, R60, 87 to 90, K98, 114 to 115, and 183 to 184; these read RHGKSEWN, TG, ERHY, RR, and GN. Catalysis depends on H9, which acts as the Tele-phosphohistidine intermediate. E87 acts as the Proton donor/acceptor in catalysis.

The protein belongs to the phosphoglycerate mutase family. BPG-dependent PGAM subfamily. As to quaternary structure, homodimer.

It carries out the reaction (2R)-2-phosphoglycerate = (2R)-3-phosphoglycerate. It functions in the pathway carbohydrate degradation; glycolysis; pyruvate from D-glyceraldehyde 3-phosphate: step 3/5. In terms of biological role, catalyzes the interconversion of 2-phosphoglycerate and 3-phosphoglycerate. The sequence is that of 2,3-bisphosphoglycerate-dependent phosphoglycerate mutase from Nautilia profundicola (strain ATCC BAA-1463 / DSM 18972 / AmH).